A 417-amino-acid polypeptide reads, in one-letter code: Sterile alpha motif domain-containing protein 14 (417 aa).

Residues 37 to 306 (LLVKGRRHRP…QETKCSYPYH (270 aa)) are disordered. A compositionally biased stretch (basic residues) spans 40–49 (KGRRHRPSRS). Residues serine 84 and serine 108 each carry the phosphoserine modification. Residues 138-153 (SGSPPRSAPSSDSSPS) show a composition bias toward low complexity. A compositionally biased stretch (basic and acidic residues) spans 159 to 173 (PRAEPHSEDDSRDAS). 2 positions are modified to phosphoserine: serine 173 and serine 179. 2 stretches are compositionally biased toward low complexity: residues 244-260 (SGKG…PTCS) and 276-289 (STLS…SSSP). Residue serine 279 is modified to Phosphoserine. A Phosphothreonine modification is found at threonine 283. Positions 326 to 389 (WTSQQVGQWL…KRKLKELAAA (64 aa)) constitute an SAM domain. Residues 375–416 (DRALVKRKLKELAAAAEKERKAQEKTARQREKLRRREHEAKK) are a coiled coil. Positions 390 to 417 (AEKERKAQEKTARQREKLRRREHEAKKS) are disordered.

The chain is Sterile alpha motif domain-containing protein 14 (Samd14) from Rattus norvegicus (Rat).